Reading from the N-terminus, the 114-residue chain is UPF0342 protein LSL_0473 (114 aa).

The protein belongs to the UPF0342 family.

In Ligilactobacillus salivarius (strain UCC118) (Lactobacillus salivarius), this protein is UPF0342 protein LSL_0473.